A 332-amino-acid chain; its full sequence is Cysteine and histidine-rich domain-containing protein 1 (332 aa).

An N-acetylalanine modification is found at Ala2. The interval 2-77 (ALLCYNRGCG…KPPESVKPEV (76 aa)) is interaction with PPP5C. Zn(2+)-binding residues include Cys5, Cys10, Cys24, His27, Cys42, and Cys43. CHORD domains follow at residues 5–64 (CYNR…KGRH) and 157–216 (CKNG…KGKH). The residue at position 47 (Thr47) is a Phosphothreonine. Phosphoserine is present on Ser51. 10 residues coordinate Zn(2+): Cys59, His64, Cys157, Cys162, Cys176, His179, Cys194, Cys195, Cys211, and His216. The interval 62-81 (GRHNSEKPPESVKPEVKTTE) is disordered. Residues 64-81 (HNSEKPPESVKPEVKTTE) are compositionally biased toward basic and acidic residues. An interaction with HSP90AA1 and HSP90AB1 region spans residues 65–316 (NSEKPPESVK…AEPMQWASLE (252 aa)). Positions 227-316 (VVPCRHDWHQ…AEPMQWASLE (90 aa)) constitute a CS domain.

Interacts with HSP90AA1, HSP90AB1, PPP5C, ROCK1 and ROCK2.

In terms of biological role, regulates centrosome duplication, probably by inhibiting the kinase activity of ROCK2. Proposed to act as co-chaperone for HSP90. May play a role in the regulation of NOD1 via a HSP90 chaperone complex. In vitro, has intrinsic chaperone activity. This function may be achieved by inhibiting association of ROCK2 with NPM1. Plays a role in ensuring the localization of the tyrosine kinase receptor EGFR to the plasma membrane, and thus ensures the subsequent regulation of EGFR activity and EGF-induced actin cytoskeleton remodeling. Involved in stress response. Prevents tumorigenesis. The sequence is that of Cysteine and histidine-rich domain-containing protein 1 (CHORDC1) from Pongo abelii (Sumatran orangutan).